The sequence spans 187 residues: Protein P18, mitochondrial (187 aa).

The N-terminal 17 residues, 1–17 (MRRLSSQLMCTAAAVRF), are a transit peptide targeting the mitochondrion. Residues 160-187 (NAAKAKADGKEHPSTLAQQQSLFDIKIQ) form a disordered region.

It localises to the mitochondrion inner membrane. In terms of biological role, putative RNA-binding protein. This is Protein P18, mitochondrial from Leishmania tarentolae (Sauroleishmania tarentolae).